We begin with the raw amino-acid sequence, 206 residues long: Emopamil-binding protein-like (206 aa).

4 consecutive transmembrane segments (helical) span residues 10 to 30 (EAGSSLLLCSALLAVGCALGL), 42 to 62 (WVLAWLCYDSLVHFVLEGAFV), 101 to 121 (LEILTVVLDGLLALVLIYAIV), and 165 to 185 (LWVYLVFFNGLWVLIPGLLLW). The 146-residue stretch at 39-184 (VERWVLAWLC…LWVLIPGLLL (146 aa)) folds into the EXPERA domain.

This sequence belongs to the EBP family. Homodimer.

The protein localises to the endoplasmic reticulum membrane. Does not possess sterol isomerase activity and does not bind sigma ligands. In Mus musculus (Mouse), this protein is Emopamil-binding protein-like (Ebpl).